The primary structure comprises 80 residues: Teretoxin Tsu6.5 (80 aa).

Positions 1 to 21 (MAINGRLLCLCLVLGLVFESL) are cleaved as a signal peptide. Residues 22–42 (GHPSVQEKRAAEDSKPSGERR) constitute a propeptide that is removed on maturation.

This sequence belongs to the teretoxin M (TM) superfamily. In terms of processing, contains 3 disulfide bonds. Expressed by the venom duct.

The protein resides in the secreted. This chain is Teretoxin Tsu6.5, found in Terebra subulata (Chocolate spotted auger).